A 196-amino-acid polypeptide reads, in one-letter code: Adenosylcobinamide-phosphate guanylyltransferase (196 aa).

Homodimer.

The catalysed reaction is adenosylcob(III)inamide phosphate + GTP + H(+) = adenosylcob(III)inamide-GDP + diphosphate. The protein operates within cofactor biosynthesis; adenosylcobalamin biosynthesis. Its function is as follows. Guanylyltransferase that catalyzes the synthesis of adenosylcobinamide-GDP (AdoCbi-GDP) from adenosylcobinamide-phosphate (AdoCbi-P) and GTP. Is involved in adenosylcobalamin biosynthesis. Binds one GTP per dimer. Cannot use other NTPs or GDP. Does not display AdoCbi kinase activity. Is also able to catalyze the condensation of 2-phospho-L-lactate (LP) with GTP in vitro to form PPi and (2S)-lactyl-2-diphospho-5'-guanosine (LPPG), but is much less efficient than CofC, the presumed enzyme catalyzing this reaction in vivo. The chain is Adenosylcobinamide-phosphate guanylyltransferase (cobY) from Methanocaldococcus jannaschii (strain ATCC 43067 / DSM 2661 / JAL-1 / JCM 10045 / NBRC 100440) (Methanococcus jannaschii).